Consider the following 124-residue polypeptide: Small ribosomal subunit protein uS12 (124 aa).

Asp-89 carries the post-translational modification 3-methylthioaspartic acid. The segment at 105-124 (QGVKNRKQARSRYGAKKEKS) is disordered. Positions 108–118 (KNRKQARSRYG) are enriched in basic residues.

Belongs to the universal ribosomal protein uS12 family. Part of the 30S ribosomal subunit. Contacts proteins S8 and S17. May interact with IF1 in the 30S initiation complex.

Its function is as follows. With S4 and S5 plays an important role in translational accuracy. In terms of biological role, interacts with and stabilizes bases of the 16S rRNA that are involved in tRNA selection in the A site and with the mRNA backbone. Located at the interface of the 30S and 50S subunits, it traverses the body of the 30S subunit contacting proteins on the other side and probably holding the rRNA structure together. The combined cluster of proteins S8, S12 and S17 appears to hold together the shoulder and platform of the 30S subunit. The polypeptide is Small ribosomal subunit protein uS12 (Mycobacterium leprae (strain Br4923)).